Reading from the N-terminus, the 117-residue chain is Large ribosomal subunit protein bL20 (117 aa).

Belongs to the bacterial ribosomal protein bL20 family.

In terms of biological role, binds directly to 23S ribosomal RNA and is necessary for the in vitro assembly process of the 50S ribosomal subunit. It is not involved in the protein synthesizing functions of that subunit. This is Large ribosomal subunit protein bL20 from Marinobacter nauticus (strain ATCC 700491 / DSM 11845 / VT8) (Marinobacter aquaeolei).